Here is a 391-residue protein sequence, read N- to C-terminus: tRNA (cytosine(38)-C(5))-methyltransferase (391 aa).

One can recognise an SAM-dependent MTase C5-type domain in the interval 4 to 391; sequence LRVLELYSGI…VSKLLTVLCE (388 aa). S-adenosyl-L-methionine contacts are provided by residues 13–15, D34, 57–58, and S76; these read IGG and IE. The active site involves C79. S376 contributes to the S-adenosyl-L-methionine binding site.

It belongs to the class I-like SAM-binding methyltransferase superfamily. C5-methyltransferase family.

The protein resides in the cytoplasm. The enzyme catalyses cytidine(38) in tRNA + S-adenosyl-L-methionine = 5-methylcytidine(38) in tRNA + S-adenosyl-L-homocysteine + H(+). Specifically methylates cytosine 38 in the anticodon loop of tRNA(Asp). Has higher activity on tRNA(Asp) modified with queuosine at position 34. This Rattus norvegicus (Rat) protein is tRNA (cytosine(38)-C(5))-methyltransferase (Trdmt1).